The following is a 404-amino-acid chain: Argininosuccinate synthase (404 aa).

Residues 10 to 18 (AFSGGLDTS) and A37 each bind ATP. L-citrulline contacts are provided by Y88 and S93. G118 provides a ligand contact to ATP. T120, N124, and D125 together coordinate L-aspartate. Position 124 (N124) interacts with L-citrulline. Positions 128, 179, 188, 264, and 276 each coordinate L-citrulline.

The protein belongs to the argininosuccinate synthase family. Type 1 subfamily. Homotetramer.

The protein resides in the cytoplasm. It carries out the reaction L-citrulline + L-aspartate + ATP = 2-(N(omega)-L-arginino)succinate + AMP + diphosphate + H(+). It participates in amino-acid biosynthesis; L-arginine biosynthesis; L-arginine from L-ornithine and carbamoyl phosphate: step 2/3. This chain is Argininosuccinate synthase, found in Nitrosomonas eutropha (strain DSM 101675 / C91 / Nm57).